A 224-amino-acid polypeptide reads, in one-letter code: Ribosomal RNA large subunit methyltransferase E (224 aa).

Positions 64, 66, 97, 113, and 138 each coordinate S-adenosyl-L-methionine. K178 serves as the catalytic Proton acceptor.

This sequence belongs to the class I-like SAM-binding methyltransferase superfamily. RNA methyltransferase RlmE family.

The protein resides in the cytoplasm. It carries out the reaction uridine(2552) in 23S rRNA + S-adenosyl-L-methionine = 2'-O-methyluridine(2552) in 23S rRNA + S-adenosyl-L-homocysteine + H(+). In terms of biological role, specifically methylates the uridine in position 2552 of 23S rRNA at the 2'-O position of the ribose in the fully assembled 50S ribosomal subunit. The chain is Ribosomal RNA large subunit methyltransferase E from Methylibium petroleiphilum (strain ATCC BAA-1232 / LMG 22953 / PM1).